A 403-amino-acid polypeptide reads, in one-letter code: F-box protein At1g60400 (403 aa).

One can recognise an F-box domain in the interval 13 to 59; sequence IDRLSALPEHLLCRILSELSTKDSVRTSVLSKHWRNLWLHVPVLELE.

The protein is F-box protein At1g60400 of Arabidopsis thaliana (Mouse-ear cress).